The chain runs to 188 residues: Small ribosomal subunit protein uS7 (188 aa).

This sequence belongs to the universal ribosomal protein uS7 family. As to quaternary structure, part of the 30S ribosomal subunit.

In terms of biological role, one of the primary rRNA binding proteins, it binds directly to 16S rRNA where it nucleates assembly of the head domain of the 30S subunit. Is located at the subunit interface close to the decoding center. This is Small ribosomal subunit protein uS7 from Methanococcus aeolicus (strain ATCC BAA-1280 / DSM 17508 / OCM 812 / Nankai-3).